Here is a 179-residue protein sequence, read N- to C-terminus: Transcription factor NF-E4 (179 aa).

Lysine 43 carries the N6-acetyllysine modification. Positions 100-179 are disordered; that stretch reads AMKATGPHNA…QLPSLHLSQG (80 aa). Polar residues-rich tracts occupy residues 143–153 and 163–179; these read LSQSNPPTRIS and ALEQ…LSQG.

As to quaternary structure, component of the SSP (stage selector protein) complex, which appears to be a heteromer of TFCP2 and 2 copies of NFE4. Interacts with HDAC1 and PCAF. Isoform 2 interacts with TFCP2. In terms of processing, acetylation at Lys-43 prolongs the protein half-life by preventing ubiquitin-mediated degradation and reduces the interaction between NF-E4 and HDAC1, potentially maximizing the activating ability of the factor at the gamma-promoter. Post-translationally, ubiquitinated; leading to its degradation by the proteasome. Acetylation at Lys-43 prevents ubiquitination. Specifically expressed in fetal liver, cord blood and bone marrow. Also expressed in the K562 and HEL cell lines, which constitutively express the fetal globin genes.

It localises to the nucleus. Functionally, functions as part of the SSP (stage selector protein) complex, a complex that contributes to the preferential expression of the gamma-gene in fetal erythroid cells by facilitating the interaction of the gamma-globin genes with enhancer elements contained in the locus control region (LCR). The complex binds to the stage selector element (SSE) in the proximal gamma-globin promoter. In contrast, isoform 2 acts as a repressor of gamma-globin gene expression by preventing NFE2 and RNA polymerase II recruitment to the promoter. The chain is Transcription factor NF-E4 (NFE4) from Homo sapiens (Human).